The chain runs to 140 residues: Phosphoribosyl-AMP cyclohydrolase (140 aa).

Mg(2+) is bound at residue Asp-78. A Zn(2+)-binding site is contributed by Cys-79. Mg(2+) is bound by residues Asp-80 and Asp-82. Residues Cys-96 and Cys-103 each contribute to the Zn(2+) site.

The protein belongs to the PRA-CH family. In terms of assembly, homodimer. Mg(2+) is required as a cofactor. Requires Zn(2+) as cofactor.

The protein localises to the cytoplasm. It catalyses the reaction 1-(5-phospho-beta-D-ribosyl)-5'-AMP + H2O = 1-(5-phospho-beta-D-ribosyl)-5-[(5-phospho-beta-D-ribosylamino)methylideneamino]imidazole-4-carboxamide. It participates in amino-acid biosynthesis; L-histidine biosynthesis; L-histidine from 5-phospho-alpha-D-ribose 1-diphosphate: step 3/9. Its function is as follows. Catalyzes the hydrolysis of the adenine ring of phosphoribosyl-AMP. This Ralstonia nicotianae (strain ATCC BAA-1114 / GMI1000) (Ralstonia solanacearum) protein is Phosphoribosyl-AMP cyclohydrolase.